The sequence spans 235 residues: Mediator of RNA polymerase II transcription subunit 29 (235 aa).

Residues 1–14 (MMNQMGMMMQQQGV) are compositionally biased toward low complexity. Residues 1–54 (MMNQMGMMMQQQGVGVPGGPGGVGGVGMPGPGGVGVAPGMMQSPQMQQAQQQQV) are disordered. Residues 15–36 (GVPGGPGGVGGVGMPGPGGVGV) show a composition bias toward gly residues. Residues 37-54 (APGMMQSPQMQQAQQQQV) are compositionally biased toward low complexity.

It belongs to the Mediator complex subunit 29 family. In terms of assembly, component of the Mediator complex.

It is found in the nucleus. Its function is as follows. Component of the Mediator complex, a coactivator involved in the regulated transcription of nearly all RNA polymerase II-dependent genes. Mediator functions as a bridge to convey information from gene-specific regulatory proteins to the basal RNA polymerase II transcription machinery. Mediator is recruited to promoters by direct interactions with regulatory proteins and serves as a scaffold for the assembly of a functional preinitiation complex with RNA polymerase II and the general transcription factors. The polypeptide is Mediator of RNA polymerase II transcription subunit 29 (ix) (Anopheles gambiae (African malaria mosquito)).